The primary structure comprises 330 residues: Peroxidase 42 (330 aa).

The signal sequence occupies residues 1 to 23 (MGGKGVMMVAILCLWALSATSEA). Intrachain disulfides connect cysteine 40–cysteine 119, cysteine 73–cysteine 78, cysteine 125–cysteine 323, and cysteine 204–cysteine 231. Catalysis depends on histidine 71, which acts as the Proton acceptor. 4 residues coordinate Ca(2+): aspartate 72, valine 75, aspartate 79, and serine 81. A substrate-binding site is contributed by proline 167. A glycan (N-linked (GlcNAc...) asparagine) is linked at asparagine 170. Histidine 197 lines the heme b pocket. A Ca(2+)-binding site is contributed by serine 198. Positions 247, 250, and 255 each coordinate Ca(2+).

Belongs to the peroxidase family. Classical plant (class III) peroxidase subfamily. Requires heme b as cofactor. Ca(2+) is required as a cofactor. Constitutively expressed in the whole plant, with the highest expression in roots.

The protein localises to the secreted. It carries out the reaction 2 a phenolic donor + H2O2 = 2 a phenolic radical donor + 2 H2O. In terms of biological role, removal of H(2)O(2), oxidation of toxic reductants, biosynthesis and degradation of lignin, suberization, auxin catabolism, response to environmental stresses such as wounding, pathogen attack and oxidative stress. These functions might be dependent on each isozyme/isoform in each plant tissue. Functionally, might function as heat shock-like defense protein. This is Peroxidase 42 (PER42) from Arabidopsis thaliana (Mouse-ear cress).